The chain runs to 601 residues: Glutathione-regulated potassium-efflux system protein KefB (601 aa).

A run of 13 helical transmembrane segments spans residues 5–25 (DLLLAGVLFLFAAVVAVPLAA), 29–49 (IGAVLGYLLAGIAIGPWGLGF), 55–75 (EILHFSELGVVFLMFIIGLEL), 87–107 (IFGVGAAQVLFSAVILGGLLM), 115–135 (AAVIGGIGLAMSSTAMALQLM), 152–172 (VLLFQDLAVIPALALVPLLAG), 177–197 (HFDWMKVGMKVLAFVGMLIGG), 207–227 (FIAASGVREVFTAATLLLVLG), 230–250 (LFMDALGLSMALGTFIAGILL), 261–281 (IAIDPFKGLLLGLFFISVGMA), 284–304 (LGVLYTHLLWVVVSVAVLVAV), 326–346 (FAGVLSQGGEFAFVLFSTAAS), and 356–376 (ALLLVTVTLSMMTTPLLMKLI). Positions 400 to 518 (KPQVIVVGFG…QAGVTNFSRE (119 aa)) constitute an RCK N-terminal domain.

The protein belongs to the monovalent cation:proton antiporter 2 (CPA2) transporter (TC 2.A.37) family. KefB subfamily. In terms of assembly, interacts with the regulatory subunit KefG.

The protein localises to the cell inner membrane. Pore-forming subunit of a potassium efflux system that confers protection against electrophiles. Catalyzes K(+)/H(+) antiport. The polypeptide is Glutathione-regulated potassium-efflux system protein KefB (Enterobacter sp. (strain 638)).